Consider the following 91-residue polypeptide: Small ribosomal subunit protein bS20 (91 aa).

Residues 1 to 21 (MPLHKSAEKRLRQSARRNERN) show a composition bias toward basic and acidic residues. Disordered stretches follow at residues 1-25 (MPLH…RARK) and 70-91 (PNKA…MKAE). Positions 70–79 (PNKASRKKSQ) are enriched in basic residues.

This sequence belongs to the bacterial ribosomal protein bS20 family.

Binds directly to 16S ribosomal RNA. This Chlorobium phaeobacteroides (strain BS1) protein is Small ribosomal subunit protein bS20.